The following is a 442-amino-acid chain: UPF0597 protein HRM2_02820 (442 aa).

It belongs to the UPF0597 family.

In Desulforapulum autotrophicum (strain ATCC 43914 / DSM 3382 / VKM B-1955 / HRM2) (Desulfobacterium autotrophicum), this protein is UPF0597 protein HRM2_02820.